We begin with the raw amino-acid sequence, 379 residues long: DNA replication and repair protein RecF (379 aa).

Residue 30–37 (GDNAQGKS) coordinates ATP.

The protein belongs to the RecF family.

The protein localises to the cytoplasm. The RecF protein is involved in DNA metabolism; it is required for DNA replication and normal SOS inducibility. RecF binds preferentially to single-stranded, linear DNA. It also seems to bind ATP. This Thermosynechococcus vestitus (strain NIES-2133 / IAM M-273 / BP-1) protein is DNA replication and repair protein RecF.